The primary structure comprises 141 residues: Large ribosomal subunit protein uL11 (141 aa).

The protein belongs to the universal ribosomal protein uL11 family. In terms of assembly, part of the ribosomal stalk of the 50S ribosomal subunit. Interacts with L10 and the large rRNA to form the base of the stalk. L10 forms an elongated spine to which L12 dimers bind in a sequential fashion forming a multimeric L10(L12)X complex. Post-translationally, one or more lysine residues are methylated.

Forms part of the ribosomal stalk which helps the ribosome interact with GTP-bound translation factors. The polypeptide is Large ribosomal subunit protein uL11 (Synechococcus elongatus (strain ATCC 33912 / PCC 7942 / FACHB-805) (Anacystis nidulans R2)).